Here is a 932-residue protein sequence, read N- to C-terminus: Glycine dehydrogenase (decarboxylating) (932 aa).

Lysine 685 carries the N6-(pyridoxal phosphate)lysine modification.

It belongs to the GcvP family. In terms of assembly, the glycine cleavage system is composed of four proteins: P, T, L and H. Pyridoxal 5'-phosphate serves as cofactor.

It carries out the reaction N(6)-[(R)-lipoyl]-L-lysyl-[glycine-cleavage complex H protein] + glycine + H(+) = N(6)-[(R)-S(8)-aminomethyldihydrolipoyl]-L-lysyl-[glycine-cleavage complex H protein] + CO2. In terms of biological role, the glycine cleavage system catalyzes the degradation of glycine. The P protein binds the alpha-amino group of glycine through its pyridoxal phosphate cofactor; CO(2) is released and the remaining methylamine moiety is then transferred to the lipoamide cofactor of the H protein. This chain is Glycine dehydrogenase (decarboxylating), found in Brucella melitensis biotype 1 (strain ATCC 23456 / CCUG 17765 / NCTC 10094 / 16M).